A 622-amino-acid chain; its full sequence is Low affinity potassium transport system protein Kup (622 aa).

A run of 12 helical transmembrane segments spans residues 9-29 (LPAI…TSPL), 49-69 (VFGF…IKYL), 103-123 (VIMG…TPAI), 137-157 (PQLD…LFMI), 165-185 (VGKL…GLGL), 213-233 (VSFI…ALYA), 247-267 (WFTV…ALLL), 276-296 (PFFL…AALA), 337-357 (IYIP…IVSF), 363-383 (LAAA…ILST), 396-416 (FVAL…TANL), and 419-439 (LLSG…VMTT).

The protein belongs to the HAK/KUP transporter (TC 2.A.72) family.

The protein localises to the cell inner membrane. It carries out the reaction K(+)(in) + H(+)(in) = K(+)(out) + H(+)(out). Its function is as follows. Responsible for the low-affinity transport of potassium into the cell. Likely operates as a K(+):H(+) symporter. This Escherichia coli (strain K12 / MC4100 / BW2952) protein is Low affinity potassium transport system protein Kup.